The following is a 691-amino-acid chain: Threonine--tRNA ligase (691 aa).

The region spanning 1–69 is the TGS domain; that stretch reads MSTPEITPAA…QQDVEVAAVP (69 aa). Residues 268–574 form a catalytic region; sequence DHRRLGQELD…LLEHYAGAFP (307 aa). Zn(2+)-binding residues include C373, H424, and H551.

It belongs to the class-II aminoacyl-tRNA synthetase family. As to quaternary structure, homodimer. It depends on Zn(2+) as a cofactor.

It is found in the cytoplasm. The enzyme catalyses tRNA(Thr) + L-threonine + ATP = L-threonyl-tRNA(Thr) + AMP + diphosphate + H(+). Catalyzes the attachment of threonine to tRNA(Thr) in a two-step reaction: L-threonine is first activated by ATP to form Thr-AMP and then transferred to the acceptor end of tRNA(Thr). Also edits incorrectly charged L-seryl-tRNA(Thr). The sequence is that of Threonine--tRNA ligase from Corynebacterium jeikeium (strain K411).